Consider the following 160-residue polypeptide: Cytochrome b6-f complex subunit 4 (160 aa).

Transmembrane regions (helical) follow at residues Leu36–Val56, Leu95–Glu115, and Ile128–Cys148.

Belongs to the cytochrome b family. PetD subfamily. The 4 large subunits of the cytochrome b6-f complex are cytochrome b6, subunit IV (17 kDa polypeptide, PetD), cytochrome f and the Rieske protein, while the 4 small subunits are PetG, PetL, PetM and PetN. The complex functions as a dimer.

It localises to the cellular thylakoid membrane. Component of the cytochrome b6-f complex, which mediates electron transfer between photosystem II (PSII) and photosystem I (PSI), cyclic electron flow around PSI, and state transitions. This is Cytochrome b6-f complex subunit 4 from Prochlorococcus marinus (strain MIT 9312).